Here is a 341-residue protein sequence, read N- to C-terminus: MTDADPTLRPDPLPEDNDRALRPQALDEFIGQAEARANLRIFVQSARQRGEAMDHTLFHGPPGLGKTTLAQIMARELGVNFRMTSGPVLAKAGDLAAILTNLEARDVLFIDEIHRLNPAVEEVLYPAMEDFELDLVIGDGPAARTVRIELQPFTLVGATTRMGLLTTPLRDRFGIPTRLLFYTVDELFEIVSRNARKLGAPAEEAGAREIARRARGTPRIAGRLLRRVVDFAVVEGDGRITRELADHALTRLGVDQLGLDGADRRYLRLIAENYSGGPVGIETLSAALSESRDSLEEVIEPYLLQQGLIQRTPRGRMLAQKAWTHLGLDAPRPPGQSDLFG.

The tract at residues 1-182 (MTDADPTLRP…FGIPTRLLFY (182 aa)) is large ATPase domain (RuvB-L). ATP contacts are provided by residues Leu-21, Arg-22, Gly-63, Lys-66, Thr-67, Thr-68, 129–131 (EDF), Arg-172, Tyr-182, and Arg-219. Thr-67 lines the Mg(2+) pocket. Residues 183–253 (TVDELFEIVS…LADHALTRLG (71 aa)) are small ATPAse domain (RuvB-S). The interval 256 to 341 (QLGLDGADRR…RPPGQSDLFG (86 aa)) is head domain (RuvB-H). Arg-292, Arg-311, and Arg-316 together coordinate DNA.

This sequence belongs to the RuvB family. In terms of assembly, homohexamer. Forms an RuvA(8)-RuvB(12)-Holliday junction (HJ) complex. HJ DNA is sandwiched between 2 RuvA tetramers; dsDNA enters through RuvA and exits via RuvB. An RuvB hexamer assembles on each DNA strand where it exits the tetramer. Each RuvB hexamer is contacted by two RuvA subunits (via domain III) on 2 adjacent RuvB subunits; this complex drives branch migration. In the full resolvosome a probable DNA-RuvA(4)-RuvB(12)-RuvC(2) complex forms which resolves the HJ.

It localises to the cytoplasm. The enzyme catalyses ATP + H2O = ADP + phosphate + H(+). Its function is as follows. The RuvA-RuvB-RuvC complex processes Holliday junction (HJ) DNA during genetic recombination and DNA repair, while the RuvA-RuvB complex plays an important role in the rescue of blocked DNA replication forks via replication fork reversal (RFR). RuvA specifically binds to HJ cruciform DNA, conferring on it an open structure. The RuvB hexamer acts as an ATP-dependent pump, pulling dsDNA into and through the RuvAB complex. RuvB forms 2 homohexamers on either side of HJ DNA bound by 1 or 2 RuvA tetramers; 4 subunits per hexamer contact DNA at a time. Coordinated motions by a converter formed by DNA-disengaged RuvB subunits stimulates ATP hydrolysis and nucleotide exchange. Immobilization of the converter enables RuvB to convert the ATP-contained energy into a lever motion, pulling 2 nucleotides of DNA out of the RuvA tetramer per ATP hydrolyzed, thus driving DNA branch migration. The RuvB motors rotate together with the DNA substrate, which together with the progressing nucleotide cycle form the mechanistic basis for DNA recombination by continuous HJ branch migration. Branch migration allows RuvC to scan DNA until it finds its consensus sequence, where it cleaves and resolves cruciform DNA. The chain is Holliday junction branch migration complex subunit RuvB from Ruegeria pomeroyi (strain ATCC 700808 / DSM 15171 / DSS-3) (Silicibacter pomeroyi).